The primary structure comprises 378 residues: MKLKYELKKTNSGARRGQLQFERGTVETPAFMPVGTYGTVKGMTPEEVKDTGAEILLGNTFHLWLRPGQEIMKLHGDLHDFMNWKGPILTDSGGFQVFSLGATRKITEEGVHFRNPVNGDKIFMDAEKSMEIQKDLGSDIVMIFDECTPYPATHKEAKDSMEMSLRWAQRSRDHFDKQENPNSLFGIVQGGVYEDLRDVSVKGLTEIGFDGYAVGGLAVGEPKEDMHRILEHTCPQLPEDKPRYLMGVGKPEDLVEGVRRGIDMFDCVMPTRNARNGHLFVTEGVIKIRNAKHKTDTTPLDSDCDCYTCKNYSKSYLHHLDRCNEILGARLNTIHNLRFYQRVMSDIRQSIDEDRFEEFVAEFYARMGREVPPLGKES.

Asp91 serves as the catalytic Proton acceptor. Residues 91–95, Asp145, Gln189, and Gly216 contribute to the substrate site; that span reads DSGGF. Residues 247-253 form an RNA binding region; sequence GVGKPED. The Nucleophile role is filled by Asp266. Positions 271–275 are RNA binding; important for wobble base 34 recognition; that stretch reads TRNAR. Residues Cys304, Cys306, Cys309, and His335 each coordinate Zn(2+).

Belongs to the queuine tRNA-ribosyltransferase family. As to quaternary structure, homodimer. Within each dimer, one monomer is responsible for RNA recognition and catalysis, while the other monomer binds to the replacement base PreQ1. Zn(2+) serves as cofactor.

The catalysed reaction is 7-aminomethyl-7-carbaguanine + guanosine(34) in tRNA = 7-aminomethyl-7-carbaguanosine(34) in tRNA + guanine. It functions in the pathway tRNA modification; tRNA-queuosine biosynthesis. Functionally, catalyzes the base-exchange of a guanine (G) residue with the queuine precursor 7-aminomethyl-7-deazaguanine (PreQ1) at position 34 (anticodon wobble position) in tRNAs with GU(N) anticodons (tRNA-Asp, -Asn, -His and -Tyr). Catalysis occurs through a double-displacement mechanism. The nucleophile active site attacks the C1' of nucleotide 34 to detach the guanine base from the RNA, forming a covalent enzyme-RNA intermediate. The proton acceptor active site deprotonates the incoming PreQ1, allowing a nucleophilic attack on the C1' of the ribose to form the product. After dissociation, two additional enzymatic reactions on the tRNA convert PreQ1 to queuine (Q), resulting in the hypermodified nucleoside queuosine (7-(((4,5-cis-dihydroxy-2-cyclopenten-1-yl)amino)methyl)-7-deazaguanosine). This Vibrio atlanticus (strain LGP32) (Vibrio splendidus (strain Mel32)) protein is Queuine tRNA-ribosyltransferase.